The chain runs to 353 residues: Quinolinate synthase (353 aa).

2 residues coordinate iminosuccinate: His47 and Ser68. Cys113 contributes to the [4Fe-4S] cluster binding site. Residues 139-141 and Ser156 contribute to the iminosuccinate site; that span reads YAN. Cys200 is a binding site for [4Fe-4S] cluster. Residues 226–228 and Thr243 contribute to the iminosuccinate site; that span reads HPE. Cys297 lines the [4Fe-4S] cluster pocket.

This sequence belongs to the quinolinate synthase family. Type 1 subfamily. It depends on [4Fe-4S] cluster as a cofactor.

It is found in the cytoplasm. The enzyme catalyses iminosuccinate + dihydroxyacetone phosphate = quinolinate + phosphate + 2 H2O + H(+). Its pathway is cofactor biosynthesis; NAD(+) biosynthesis; quinolinate from iminoaspartate: step 1/1. Catalyzes the condensation of iminoaspartate with dihydroxyacetone phosphate to form quinolinate. The polypeptide is Quinolinate synthase (Vibrio campbellii (strain ATCC BAA-1116)).